The chain runs to 172 residues: Folate transporter FolT (172 aa).

The next 5 helical transmembrane spans lie at 6 to 26, 35 to 55, 71 to 91, 101 to 121, and 131 to 151; these read VMIYMAFMITLEIVFTRFLSI, FGFIPVAMSGMMFGPLLAGIV, AYFPGFTLSAFVGAVIYGVFF, VLLAVGIITVLVNLTMNTIWL, and VLFVTRLVKEAIMFPIHAIVI.

Forms a stable energy-coupling factor (ECF) transporter complex composed of a membrane-embedded substrate-binding protein (S component), two ATP-binding proteins (A components) and a transmembrane protein (T component).

Its subcellular location is the cell membrane. In terms of biological role, folate-binding protein that interacts with the energy-coupling factor (ECF) ABC-transporter complex. Unlike classic ABC transporters this ECF transporter provides the energy necessary to transport a number of different substrates. The substrates themselves are bound by transmembrane, not extracytoplasmic soluble proteins. In Clostridium novyi (strain NT), this protein is Folate transporter FolT (folT).